Consider the following 227-residue polypeptide: Large ribosomal subunit protein uL3 (227 aa).

This sequence belongs to the universal ribosomal protein uL3 family. As to quaternary structure, part of the 50S ribosomal subunit. Forms a cluster with proteins L14 and L19.

In terms of biological role, one of the primary rRNA binding proteins, it binds directly near the 3'-end of the 23S rRNA, where it nucleates assembly of the 50S subunit. In Persephonella marina (strain DSM 14350 / EX-H1), this protein is Large ribosomal subunit protein uL3.